Consider the following 3326-residue polypeptide: Deoxyribonuclease CdiA (3326 aa).

The tract at residues 36 to 342 (TADGVLTSGG…ARGALTLTGS (307 aa)) is two-partner system transport domain (TPS). An FHA-1 region spans residues 343 to 1396 (YAGAGSLYSD…ITVRTGTLTN (1054 aa)). A receptor binding domain (RBD) region spans residues 1397-1765 (QREGLVVTES…QQLGSPSLTD (369 aa)). Positions 1766-1951 (YPLPTSQSGL…LAQADKTNLQ (186 aa)) are YP domain. The segment at 1959–2097 (SVSLSAGGDI…AGGPLQLAAG (139 aa)) is periplasmic FHA-1 repeat (pFR). The segment at 2125–2660 (QGLVQSTVAS…SNRYDSKQTS (536 aa)) is FHA-2. Positions 3060–3063 (VENN) match the VENN CT cleavage motif motif. A CT domain region spans residues 3060–3326 (VENNSLGDIA…DRNRQIGVIK (267 aa)).

In the N-terminal section; belongs to the CdiA toxin family. The C-terminal (CT) domain interacts with cognate CdiI but not non-cognate CdiI from E.coli strain 536 / UPEC.

The protein localises to the target cell. It is found in the target cell cytoplasm. Toxic component of a toxin-immunity protein module, which functions as a cellular contact-dependent growth inhibition (CDI) system. CDI modules allow bacteria to communicate with and inhibit the growth of closely related neighboring bacteria in a contact-dependent fashion. CDI is neutralized by its cognate immunity protein CdiI, but not by non-cognate CdiI from other bacteria. The C-terminal domain (CT) has strong DNase activity; this activity is inhibited by cognate CdiI. Functionally, the CdiA protein is thought to be exported from the cell through the central lumen of CdiB, the other half of its two-partner system (TPS). The TPS domain probably remains associated with CdiB while the FHA-1 domain forms an extended filament with the receptor-binding domain (RBD) at its extremity; in the secretion arrested state the C-terminus of the RBD and YP domains form a hairpin-like structure as the FHA-2, PT and CT domains are periplasmic. The YP domain is probably responsible for this arrest at the point where it re-enters the host cell periplasm. Upon binding to a target cell outer membrane receptor a signal is transmitted to activate secretion. The filament elongates slightly, the rest of CdiA is secreted and the FHA-2 domain becomes stably associated with the target cell's outer membrane where it facilitates entry of the toxic CT domain into the target cell periplasm. From there the toxic CT domain is cleaved and gains access to the target cell cytoplasm via an inner membrane protein. This chain is Deoxyribonuclease CdiA, found in Dickeya dadantii (strain 3937) (Erwinia chrysanthemi (strain 3937)).